The sequence spans 756 residues: Ribosomal RNA large subunit methyltransferase K/L (756 aa).

The 112-residue stretch at 46-157 (TAYRLCLWSR…RGEAILSLDL (112 aa)) folds into the THUMP domain. Over residues 395 to 409 (ERRTPEQRQAEREQA) the composition is skewed to basic and acidic residues. Residues 395–441 (ERRTPEQRQAEREQAAYDQTPNEPQERKFNKNGNPIKPTPAPAPVIE) are disordered.

The protein belongs to the methyltransferase superfamily. RlmKL family.

It is found in the cytoplasm. It catalyses the reaction guanosine(2445) in 23S rRNA + S-adenosyl-L-methionine = N(2)-methylguanosine(2445) in 23S rRNA + S-adenosyl-L-homocysteine + H(+). It carries out the reaction guanosine(2069) in 23S rRNA + S-adenosyl-L-methionine = N(2)-methylguanosine(2069) in 23S rRNA + S-adenosyl-L-homocysteine + H(+). Its function is as follows. Specifically methylates the guanine in position 2445 (m2G2445) and the guanine in position 2069 (m7G2069) of 23S rRNA. The sequence is that of Ribosomal RNA large subunit methyltransferase K/L from Pseudomonas fluorescens (strain Pf0-1).